A 528-amino-acid chain; its full sequence is Protein BFR2 (528 aa).

Disordered regions lie at residues 14–158 and 372–401; these read NKSK…ADAK and DSNS…NNAI. The span at 132–146 shows a compositional bias: acidic residues; the sequence is DSGDSDSDSGSDAGE.

It belongs to the AATF family.

It localises to the nucleus. The protein resides in the nucleolus. This Eremothecium gossypii (strain ATCC 10895 / CBS 109.51 / FGSC 9923 / NRRL Y-1056) (Yeast) protein is Protein BFR2 (BFR2).